Consider the following 181-residue polypeptide: Ferritin heavy chain (181 aa).

Residue methionine 1 is modified to N-acetylmethionine. Threonine 2 is modified (N-acetylthreonine; in Ferritin heavy chain, N-terminally processed). Positions 11 to 160 (QNYHQDSEAA…DHITNLHRMG (150 aa)) constitute a Ferritin-like diiron domain. At serine 179 the chain carries Phosphoserine.

Belongs to the ferritin family. In terms of assembly, oligomer of 24 subunits. There are two types of subunits: L (light) chain and H (heavy) chain. The major chain can be light or heavy, depending on the species and tissue type. The functional molecule forms a roughly spherical shell with a diameter of 12 nm and contains a central cavity into which the insoluble mineral iron core is deposited. Interacts with NCOA4; NCOA4 promotes targeting of the iron-binding ferritin complex to autolysosomes following starvation or iron depletion. As to quaternary structure, (Microbial infection) Interacts with classical swine fever virus protein NS4B. (Microbial infection) Interacts with Porcine circovirus 2 ORF4 protein.

Its subcellular location is the cytoplasm. The protein localises to the lysosome. The protein resides in the cytoplasmic vesicle. It localises to the autophagosome. The enzyme catalyses 4 Fe(2+) + O2 + 4 H(+) = 4 Fe(3+) + 2 H2O. In terms of biological role, stores iron in a soluble, non-toxic, readily available form. Important for iron homeostasis. Has ferroxidase activity. Iron is taken up in the ferrous form and deposited as ferric hydroxides after oxidation. Also plays a role in delivery of iron to cells. Mediates iron uptake in capsule cells of the developing kidney. Delivery to lysosomes is mediated by the cargo receptor NCOA4 for autophagic degradation and release of iron. Functionally, (Microbial infection) Is unable to assume its function upon interaction with viral proteins, thereby increasing Fe concentration in the cytoplasm. This would inhibit the accumulation of reactive oxygen in host cells, leading to reduced apoptosis and increasing the survival of virus infected cell. This chain is Ferritin heavy chain (FTH1), found in Sus scrofa (Pig).